A 212-amino-acid chain; its full sequence is MPARRKYAVRDKWKLKKWYEVIAPPVFGNIVIGTTPADDPLKLIGRVMETTLYDITGDITQVHVRLYFQIIDVKENKAITRFKGHELSRDYIKSLIRRKSSKIQGIFNVVTKDGYHLRLTIIALTSYRCKTSQKRAIRKIMEEYVKERVPQLTLDELIHEMVFGKMSAVIAERARKIYPIRKVEVYKSKLLMIPTPEGPKPAVVISPLQLGR.

The protein belongs to the eukaryotic ribosomal protein eS1 family.

This is Small ribosomal subunit protein eS1 from Staphylothermus marinus (strain ATCC 43588 / DSM 3639 / JCM 9404 / F1).